The primary structure comprises 380 residues: Cytochrome b (380 aa).

A run of 4 helical transmembrane segments spans residues phenylalanine 34–alanine 54, tryptophan 78–isoleucine 99, tryptophan 114–leucine 134, and phenylalanine 179–threonine 199. Histidine 84 and histidine 98 together coordinate heme b. Residues histidine 183 and histidine 197 each coordinate heme b. Residue histidine 202 coordinates a ubiquinone. The next 4 helical transmembrane spans lie at threonine 227 to serine 247, leucine 289 to histidine 309, leucine 321 to serine 341, and phenylalanine 348 to proline 368.

Belongs to the cytochrome b family. In terms of assembly, the cytochrome bc1 complex contains 11 subunits: 3 respiratory subunits (MT-CYB, CYC1 and UQCRFS1), 2 core proteins (UQCRC1 and UQCRC2) and 6 low-molecular weight proteins (UQCRH/QCR6, UQCRB/QCR7, UQCRQ/QCR8, UQCR10/QCR9, UQCR11/QCR10 and a cleavage product of UQCRFS1). This cytochrome bc1 complex then forms a dimer. It depends on heme b as a cofactor.

Its subcellular location is the mitochondrion inner membrane. Component of the ubiquinol-cytochrome c reductase complex (complex III or cytochrome b-c1 complex) that is part of the mitochondrial respiratory chain. The b-c1 complex mediates electron transfer from ubiquinol to cytochrome c. Contributes to the generation of a proton gradient across the mitochondrial membrane that is then used for ATP synthesis. This chain is Cytochrome b (MT-CYB), found in Eudyptes chrysolophus (Macaroni penguin).